Consider the following 499-residue polypeptide: Probable aspartyl protease At4g16563 (499 aa).

The first 26 residues, Met1–Ser26, serve as a signal peptide directing secretion. Residues Tyr83 to Ala487 enclose the Peptidase A1 domain. Asp101 is a catalytic residue. Cys111 and Cys119 are disulfide-bonded. Asn175 and Asn211 each carry an N-linked (GlcNAc...) asparagine glycan. Asp353 is a catalytic residue. Cys396 and Cys445 are oxidised to a cystine. 2 N-linked (GlcNAc...) asparagine glycosylation sites follow: Asn400 and Asn415.

This sequence belongs to the peptidase A1 family.

The protein is Probable aspartyl protease At4g16563 of Arabidopsis thaliana (Mouse-ear cress).